Consider the following 311-residue polypeptide: Ribosomal RNA small subunit methyltransferase H (311 aa).

S-adenosyl-L-methionine-binding positions include 33 to 35 (AGH), Asp-53, Phe-80, Asp-101, and Gln-108.

Belongs to the methyltransferase superfamily. RsmH family.

Its subcellular location is the cytoplasm. The enzyme catalyses cytidine(1402) in 16S rRNA + S-adenosyl-L-methionine = N(4)-methylcytidine(1402) in 16S rRNA + S-adenosyl-L-homocysteine + H(+). Its function is as follows. Specifically methylates the N4 position of cytidine in position 1402 (C1402) of 16S rRNA. The sequence is that of Ribosomal RNA small subunit methyltransferase H from Geobacter sulfurreducens (strain ATCC 51573 / DSM 12127 / PCA).